A 113-amino-acid polypeptide reads, in one-letter code: P antigen family member 3 (113 aa).

Over residues 1–12 the composition is skewed to basic residues; it reads MSGHQRTRSRSR. Disordered stretches follow at residues 1 to 61 and 78 to 113; these read MSGH…EGAL and SKTG…QPSV.

The protein belongs to the GAGE family.

This chain is P antigen family member 3 (PAGE3), found in Homo sapiens (Human).